Here is a 442-residue protein sequence, read N- to C-terminus: tRNA-2-methylthio-N(6)-dimethylallyladenosine synthase (442 aa).

Positions K5 to K122 constitute an MTTase N-terminal domain. [4Fe-4S] cluster is bound by residues C14, C51, C85, C159, C163, and C166. One can recognise a Radical SAM core domain in the interval K145 to I378. A TRAM domain is found at R380 to I442.

It belongs to the methylthiotransferase family. MiaB subfamily. As to quaternary structure, monomer. [4Fe-4S] cluster serves as cofactor.

The protein resides in the cytoplasm. It catalyses the reaction N(6)-dimethylallyladenosine(37) in tRNA + (sulfur carrier)-SH + AH2 + 2 S-adenosyl-L-methionine = 2-methylsulfanyl-N(6)-dimethylallyladenosine(37) in tRNA + (sulfur carrier)-H + 5'-deoxyadenosine + L-methionine + A + S-adenosyl-L-homocysteine + 2 H(+). In terms of biological role, catalyzes the methylthiolation of N6-(dimethylallyl)adenosine (i(6)A), leading to the formation of 2-methylthio-N6-(dimethylallyl)adenosine (ms(2)i(6)A) at position 37 in tRNAs that read codons beginning with uridine. This chain is tRNA-2-methylthio-N(6)-dimethylallyladenosine synthase, found in Francisella tularensis subsp. tularensis (strain FSC 198).